Reading from the N-terminus, the 237-residue chain is Insulin-like growth factor-binding protein 4 (237 aa).

Residues 2 to 82 (EAIHCPPCSE…VHGQGVCMEL (81 aa)) form the IGFBP N-terminal domain. 6 disulfide bridges follow: cysteine 6–cysteine 32, cysteine 9–cysteine 34, cysteine 17–cysteine 35, cysteine 23–cysteine 38, cysteine 46–cysteine 59, and cysteine 53–cysteine 79. Asparagine 104 carries an N-linked (GlcNAc...) asparagine glycan. Intrachain disulfides connect cysteine 110-cysteine 117, cysteine 153-cysteine 183, cysteine 194-cysteine 205, and cysteine 207-cysteine 228. The Thyroglobulin type-1 domain occupies 150-228 (QGSCQSELHR…GLEPKGELDC (79 aa)). Serine 234 is modified (phosphoserine).

As to quaternary structure, binds IGF2 more than IGF1. Post-translationally, there are two different molecular mass variants (29 kDa and 24 kDa forms). The 29 kDa form was shown to be N-glycosylated. In terms of tissue distribution, detected in adult ewe, liver &gt; kidney &gt; lung &gt;&gt; heart and also in several fetal tissues.

The protein resides in the secreted. In terms of biological role, IGF-binding proteins prolong the half-life of the IGFs and have been shown to either inhibit or stimulate the growth promoting effects of the IGFs on cell culture. They alter the interaction of IGFs with their cell surface receptors. This Ovis aries (Sheep) protein is Insulin-like growth factor-binding protein 4 (IGFBP4).